A 518-amino-acid polypeptide reads, in one-letter code: Protein nucleotidyltransferase YdiU (518 aa).

Residues 1-22 (MTHLQFDNRLRAELPGDPEEGP) are disordered. Gly100, Gly102, Arg103, Lys123, Asp135, Gly136, Arg193, and Arg200 together coordinate ATP. Asp270 acts as the Proton acceptor in catalysis. 2 residues coordinate Mg(2+): Asn271 and Asp280. Asp280 lines the ATP pocket.

It belongs to the SELO family. The cofactor is Mg(2+). It depends on Mn(2+) as a cofactor.

The catalysed reaction is L-seryl-[protein] + ATP = 3-O-(5'-adenylyl)-L-seryl-[protein] + diphosphate. The enzyme catalyses L-threonyl-[protein] + ATP = 3-O-(5'-adenylyl)-L-threonyl-[protein] + diphosphate. It catalyses the reaction L-tyrosyl-[protein] + ATP = O-(5'-adenylyl)-L-tyrosyl-[protein] + diphosphate. It carries out the reaction L-histidyl-[protein] + UTP = N(tele)-(5'-uridylyl)-L-histidyl-[protein] + diphosphate. The catalysed reaction is L-seryl-[protein] + UTP = O-(5'-uridylyl)-L-seryl-[protein] + diphosphate. The enzyme catalyses L-tyrosyl-[protein] + UTP = O-(5'-uridylyl)-L-tyrosyl-[protein] + diphosphate. Functionally, nucleotidyltransferase involved in the post-translational modification of proteins. It can catalyze the addition of adenosine monophosphate (AMP) or uridine monophosphate (UMP) to a protein, resulting in modifications known as AMPylation and UMPylation. This is Protein nucleotidyltransferase YdiU from Xanthomonas campestris pv. campestris (strain 8004).